The primary structure comprises 2485 residues: Tyrosine-protein phosphatase non-receptor type 13 (2485 aa).

One can recognise a KIND domain in the interval 3 to 190 (VSLAEALEVR…SGTDQLSCNS (188 aa)). The segment at 186 to 220 (LSCNSEQKPDRSQAIRDRLRGKGLPTGRSSTSDVL) is disordered. A compositionally biased stretch (basic and acidic residues) spans 192 to 205 (QKPDRSQAIRDRLR). Position 240 is a phosphoserine (S240). A disordered region spans residues 260–283 (SDNSGREDSENTFSPYQFKTSGPE). The span at 270–279 (NTFSPYQFKT) shows a compositional bias: polar residues. Phosphoserine occurs at positions 301 and 302. Residues 433-467 (RSEASKRFESSSGLPGVDETLSQGQSQRPSRQYET) form a disordered region. Residues 452–465 (TLSQGQSQRPSRQY) are compositionally biased toward polar residues. A coiled-coil region spans residues 469-504 (FEGNLINQEIMLKRQEEELMQLQAKMALRQSRLSLY). One can recognise an FERM domain in the interval 572–872 (RKVNIMLLNG…YQHKFQLQMR (301 aa)). Residues S890, S897, S908, S911, and S914 each carry the phosphoserine modification. 2 disordered regions span residues 947–975 (QNSSKEKNDKASWEEKPREMSKSYHDLSQ) and 995–1049 (TVAE…IEDP). The span at 950 to 971 (SKEKNDKASWEEKPREMSKSYH) shows a compositional bias: basic and acidic residues. A compositionally biased stretch (polar residues) spans 1020–1032 (KLNNSKSVASLNR). Residues S1029, S1033, and S1085 each carry the phosphoserine modification. Over residues 1033–1042 (SPERRKHESD) the composition is skewed to basic and acidic residues. Residues 1093 to 1178 (LVNLKKDAKY…EDVTLVISQP (86 aa)) enclose the PDZ 1 domain. 2 disordered regions span residues 1227-1258 (HISENSFGPSGGLREGSLSSQDSRTESASLSQ) and 1273-1362 (TWQE…SPPK). 3 stretches are compositionally biased toward polar residues: residues 1243 to 1258 (SLSSQDSRTESASLSQ), 1273 to 1288 (TWQESQHGSPSPSVIS), and 1327 to 1359 (TYSSSQDHQTPKQESSSSVNTSNKMNFKTFSSS). PDZ domains are found at residues 1368–1452 (EVEL…LEKG) and 1501–1588 (EVKL…LCRP). A compositionally biased stretch (polar residues) spans 1608–1630 (AQVLPNSSKDSSQPSCVEQSTSS). Disordered regions lie at residues 1608 to 1665 (AQVL…DLVT) and 1715 to 1751 (PNKPEFEDSNPSPLPPDMAPGQSYQPQSESASSSSMD). The segment covering 1736–1749 (QSYQPQSESASSSS) has biased composition (low complexity). PDZ domains are found at residues 1788 to 1868 (LITL…IGRV) and 1882 to 1965 (PDIT…ATRN). The tract at residues 1971–1996 (PSSKRSAVSAPKSTKGNGSYSVGSCS) is disordered. The span at 1973–1996 (SKRSAVSAPKSTKGNGSYSVGSCS) shows a compositional bias: polar residues. The region spanning 2213-2467 (PSKELENLQE…IFCYQVILYV (255 aa)) is the Tyrosine-protein phosphatase domain. Substrate contacts are provided by residues D2378, 2408–2414 (CSAGIGR), and Q2452. C2408 serves as the catalytic Phosphocysteine intermediate. A substrate region spans residues 2408 to 2414 (CSAGIGR).

It belongs to the protein-tyrosine phosphatase family. Non-receptor class subfamily. As to quaternary structure, interacts (via the first PDZ domain) with PLEKHA1 and PLEKHA2. Interacts (via the second PDZ domain) with TNFRSF6 (Fas receptor) (via C-terminus). Interacts (via the second PDZ domain) with TRIP6 (via the third LIM domain and C-terminus). Interacts (via the third PDZ domain) with NGFR (via C-terminal SVP motif) and PKN2 (via C-terminus). Interacts (via the second or fourth PDZ domains) with PDLIM4 (via C-terminus only or via combined C-terminus and LIM domain, but not LIM domain only). Found in a complex with PDLIM4 and TRIP6. Interacts with PDLIM4; this interaction results in dephosphorylation of SRC 'Tyr-419' by this protein leading to its inactivation. Interacts with BRD7. Interacts with RAPGEF6. Interacts with ARHGAP29. Interacts with PIK3R2; dephosphorylates PIK3R2. Interacts with FBXL2. Interacts (via the FERM domain) with ENTR1. Found in a complex with ENTR1, PTPN13 and GIT1. In terms of tissue distribution, expressed in keratinocytes (at protein level). Present in most tissues with the exception of the liver and skeletal muscle. Most abundant in lung, kidney and fetal brain.

It is found in the cytoplasm. Its subcellular location is the cytoskeleton. The protein resides in the nucleus. The protein localises to the cell projection. It localises to the lamellipodium. It carries out the reaction O-phospho-L-tyrosyl-[protein] + H2O = L-tyrosyl-[protein] + phosphate. Functionally, tyrosine phosphatase which negatively regulates FAS-induced apoptosis and NGFR-mediated pro-apoptotic signaling. May regulate phosphoinositide 3-kinase (PI3K) signaling through dephosphorylation of PIK3R2. The polypeptide is Tyrosine-protein phosphatase non-receptor type 13 (PTPN13) (Homo sapiens (Human)).